Here is a 188-residue protein sequence, read N- to C-terminus: Pyridoxal 5'-phosphate synthase subunit PdxT (188 aa).

Position 46 to 48 (G46 to S48) interacts with L-glutamine. C78 functions as the Nucleophile in the catalytic mechanism. L-glutamine contacts are provided by residues R105 and I134 to R135. Active-site charge relay system residues include H170 and E172.

It belongs to the glutaminase PdxT/SNO family. As to quaternary structure, in the presence of PdxS, forms a dodecamer of heterodimers. Only shows activity in the heterodimer.

It catalyses the reaction aldehydo-D-ribose 5-phosphate + D-glyceraldehyde 3-phosphate + L-glutamine = pyridoxal 5'-phosphate + L-glutamate + phosphate + 3 H2O + H(+). It carries out the reaction L-glutamine + H2O = L-glutamate + NH4(+). It functions in the pathway cofactor biosynthesis; pyridoxal 5'-phosphate biosynthesis. Functionally, catalyzes the hydrolysis of glutamine to glutamate and ammonia as part of the biosynthesis of pyridoxal 5'-phosphate. The resulting ammonia molecule is channeled to the active site of PdxS. The protein is Pyridoxal 5'-phosphate synthase subunit PdxT of Thermotoga neapolitana (strain ATCC 49049 / DSM 4359 / NBRC 107923 / NS-E).